The chain runs to 253 residues: DNA polymerase III subunit epsilon (253 aa).

D14 and E16 together coordinate a divalent metal cation. Residues D14, E16, D63, and H68 each coordinate substrate. Catalysis depends on H163, which acts as the Proton acceptor. Residue D168 coordinates a divalent metal cation. Substrate is bound at residue D168.

In terms of assembly, DNA polymerase III contains a core (composed of alpha, epsilon and theta chains) that associates with a tau subunit. This core dimerizes to form the POLIII' complex. PolIII' associates with the gamma complex (composed of gamma, delta, delta', psi and chi chains) and with the beta chain to form the complete DNA polymerase III complex. Mg(2+) is required as a cofactor. The cofactor is Mn(2+).

It catalyses the reaction DNA(n) + a 2'-deoxyribonucleoside 5'-triphosphate = DNA(n+1) + diphosphate. In terms of biological role, DNA polymerase III is a complex, multichain enzyme responsible for most of the replicative synthesis in bacteria. The epsilon subunit contain the editing function and is a proofreading 3'-5' exonuclease. This is DNA polymerase III subunit epsilon (dnaQ) from Pasteurella multocida (strain Pm70).